A 459-amino-acid polypeptide reads, in one-letter code: Trichothecene 3-O-acetyltransferase TRI101 (459 aa).

Ca(2+) contacts are provided by aspartate 218 and isoleucine 221. CoA-binding positions include lysine 253, 266 to 269 (FVST), aspartate 302, glutamine 318, and arginine 343. Aspartate 376 contributes to the Ca(2+) binding site. CoA-binding residues include serine 386 and lysine 390. Ca(2+) is bound at residue glutamate 449.

Belongs to the trichothecene 3-O-acetyltransferase family.

It participates in sesquiterpene biosynthesis; trichothecene biosynthesis. In terms of biological role, 3-O-acetyltransferase involved in the biosynthesis of trichothecenes, a very large family of chemically related bicyclic sesquiterpene compounds acting as mycotoxins, including T2-toxin. The biosynthesis of trichothecenes begins with the cyclization of farnesyl diphosphate to trichodiene and is catalyzed by the trichodiene synthase TRI5. Trichodiene undergoes a series of oxygenations catalyzed by the cytochrome P450 monooxygenase TRI4. TRI4 controls the addition of four oxygens at C-2, C-3, C-11, and the C-12, C-13-epoxide to form the intermediate isotrichotriol. Isotrichotriol then undergoes a non-enzymatic isomerization and cyclization to form isotrichodermol. During this process, the oxygen at the C-2 position becomes the pyran ring oxygen and the hydroxyl group at C-11 is lost. More complex type A trichothecenes are built by modifying isotrichodermol through a series of paired hydroxylation and acetylation or acylation steps. Isotrichodermol is converted to isotrichodermin by the acetyltransferase TRI101. TRI101 encodes a C-3 transacetylase that acts as a self-protection or resistance factor during biosynthesis and that the presence of a free C-3 hydroxyl group is a key component of Fusarium trichothecene phytotoxicity. A second hydroxyl group is added to C-15 by the trichothecene C-15 hydroxylase TRI11, producing 15-decalonectrin, which is then acetylated by TRI3, producing calonectrin. A third hydroxyl group is added at C-4 by the cytochrome P450 monooxygenase TRI13, converting calonectrin to 3,15-diacetoxyspirpenol, which is subsequently acetylated bythe acetyltransferase TRI7. A fourth hydroxyl group is added to C-8 by the cytochrome P450 monooxygenase TRI1, followed by the addition of an isovaleryl moiety by TRI16. Finally, the acetyl group is removed from the C-3 position by the trichothecene C-3 esterase TRI8 to produce T-2 toxin. The chain is Trichothecene 3-O-acetyltransferase TRI101 from Fusarium sporotrichioides.